The chain runs to 153 residues: Probable histone H2A.2 (153 aa).

Disordered regions lie at residues 1–24 (MDAS…KKSV) and 127–153 (KKTE…PKKA). Basic and acidic residues predominate over residues 127-141 (KKTERSNTVSKEPKS). Positions 142–153 (PKPKAGKSPKKA) are enriched in basic residues. Positions 149–152 (SPKK) match the SPKK motif motif.

It belongs to the histone H2A family. In terms of assembly, the nucleosome is a histone octamer containing two molecules each of H2A, H2B, H3 and H4 assembled in one H3-H4 heterotetramer and two H2A-H2B heterodimers. The octamer wraps approximately 147 bp of DNA.

Its subcellular location is the nucleus. The protein localises to the chromosome. Its function is as follows. Core component of nucleosome. Nucleosomes wrap and compact DNA into chromatin, limiting DNA accessibility to the cellular machineries which require DNA as a template. Histones thereby play a central role in transcription regulation, DNA repair, DNA replication and chromosomal stability. DNA accessibility is regulated via a complex set of post-translational modifications of histones, also called histone code, and nucleosome remodeling. In Medicago truncatula (Barrel medic), this protein is Probable histone H2A.2.